Consider the following 739-residue polypeptide: NAD(P)H-quinone oxidoreductase subunit 5, chloroplastic (739 aa).

Transmembrane regions (helical) follow at residues 9–29 (LIIP…LIFF), 40–60 (WAFP…NLSI), 89–109 (IDSL…LVLI), 125–145 (FAYM…SNLI), 147–167 (IHIF…FWFT), 185–205 (GDFG…SFEF), 224–244 (LFVI…SAQF), 258–278 (TPIS…FLVA), 283–303 (LFTV…ITIL), 327–347 (LGYI…FHLI), 354–374 (ALLF…VGYS), 396–416 (TAFF…CFWS), 425–445 (WLYS…TAFY), 546–566 (LFPL…GIPF), 605–625 (IFSV…YRPI), and 718–738 (ISSY…IFQV).

The protein belongs to the complex I subunit 5 family. In terms of assembly, NDH is composed of at least 16 different subunits, 5 of which are encoded in the nucleus.

It localises to the plastid. It is found in the chloroplast thylakoid membrane. It carries out the reaction a plastoquinone + NADH + (n+1) H(+)(in) = a plastoquinol + NAD(+) + n H(+)(out). The catalysed reaction is a plastoquinone + NADPH + (n+1) H(+)(in) = a plastoquinol + NADP(+) + n H(+)(out). NDH shuttles electrons from NAD(P)H:plastoquinone, via FMN and iron-sulfur (Fe-S) centers, to quinones in the photosynthetic chain and possibly in a chloroplast respiratory chain. The immediate electron acceptor for the enzyme in this species is believed to be plastoquinone. Couples the redox reaction to proton translocation, and thus conserves the redox energy in a proton gradient. In Buxus microphylla (Littleleaf boxwood), this protein is NAD(P)H-quinone oxidoreductase subunit 5, chloroplastic (ndhF).